The sequence spans 827 residues: Putative transcriptional regulatory protein C16G5.16 (827 aa).

A DNA-binding region (zn(2)-C6 fungal-type) is located at residues 16-42 (CDECHRRKIKCDQRRPCSNCIAYNYEC). Disordered regions lie at residues 80–114 (LKLP…SSQD), 158–193 (TVPN…HKKP), and 794–827 (QPPS…KRTE). A compositionally biased stretch (basic and acidic residues) spans 102–112 (KRSDSSKRSSS). Serine 112 is modified (phosphoserine). Composition is skewed to low complexity over residues 159-179 (VPNP…LSFP) and 811-827 (SNNS…KRTE).

It belongs to the ASG1 family.

Its subcellular location is the cytoplasm. It is found in the nucleus. In Schizosaccharomyces pombe (strain 972 / ATCC 24843) (Fission yeast), this protein is Putative transcriptional regulatory protein C16G5.16.